The chain runs to 490 residues: Cobyric acid synthase (490 aa).

In terms of domain architecture, GATase cobBQ-type spans 252–439; sequence RLKVVVPVLP…LHGLFESTAA (188 aa). The active-site Nucleophile is the Cys333. Residue His431 is part of the active site.

The protein belongs to the CobB/CobQ family. CobQ subfamily.

It participates in cofactor biosynthesis; adenosylcobalamin biosynthesis. Catalyzes amidations at positions B, D, E, and G on adenosylcobyrinic A,C-diamide. NH(2) groups are provided by glutamine, and one molecule of ATP is hydrogenolyzed for each amidation. This Pseudomonas paraeruginosa (strain DSM 24068 / PA7) (Pseudomonas aeruginosa (strain PA7)) protein is Cobyric acid synthase.